Here is a 390-residue protein sequence, read N- to C-terminus: Copper-containing nitrite reductase (390 aa).

The signal sequence occupies residues 1–18 (MKRQALAAMIASLFALAA). Cys-19 carries the N-palmitoyl cysteine lipid modification. Cys-19 carries S-diacylglycerol cysteine lipidation. The segment at 30 to 51 (ETPAAAAEAASSAAQTAAETPS) is disordered. Plastocyanin-like domains follow at residues 101–195 (WTFD…ILVE) and 245–346 (GHVG…LKVE). Cu cation-binding residues include His-134, His-139, His-174, Cys-175, His-183, and Met-188. His-139 serves as a coordination point for substrate. Substrate is bound at residue His-280. Position 329 (His-329) interacts with Cu cation. Positions 367–390 (GAAPAASAPAASAPAASASEKSVY) are disordered. The span at 368 to 390 (AAPAASAPAASAPAASASEKSVY) shows a compositional bias: low complexity. 3 repeat units span residues 371–375 (AASAP), 376–380 (AASAP), and 381–385 (AASAS). The interval 371–385 (AASAPAASAPAASAS) is 3 X 5 AA tandem repeats of A-A-S-A-P.

This sequence belongs to the multicopper oxidase family. As to quaternary structure, homotrimer. Cu(+) is required as a cofactor. Cu(2+) serves as cofactor.

It localises to the cell outer membrane. It catalyses the reaction nitric oxide + Fe(III)-[cytochrome c] + H2O = Fe(II)-[cytochrome c] + nitrite + 2 H(+). Catalyzes the reduction of nitrite to nitric oxide (NO). It could be essential for growth and survival in oxygen-depleted environments. The sequence is that of Copper-containing nitrite reductase (aniA) from Neisseria meningitidis serogroup B (strain ATCC BAA-335 / MC58).